We begin with the raw amino-acid sequence, 150 residues long: Large ribosomal subunit protein uL23m (150 aa).

The protein belongs to the universal ribosomal protein uL23 family. As to quaternary structure, component of the mitochondrial ribosome large subunit (39S) which comprises a 16S rRNA and about 50 distinct proteins.

The protein localises to the mitochondrion. The chain is Large ribosomal subunit protein uL23m (mRpL23) from Drosophila melanogaster (Fruit fly).